The sequence spans 294 residues: Bidirectional sugar transporter SWEET13 (294 aa).

The Extracellular segment spans residues 1–7; it reads MALTNNL. Residues 8–28 traverse the membrane as a helical segment; sequence WAFVFGILGNIISFVVFLAPV. The MtN3/slv 1 domain occupies 10–97; it reads FVFGILGNII…VLFVSYANKK (88 aa). The Cytoplasmic segment spans residues 29–42; sequence PTFVRICKKKSTEG. A helical membrane pass occupies residues 43-63; that stretch reads FQSLPYVSALFSAMLWIYYAM. The Extracellular portion of the chain corresponds to 64–69; that stretch reads QKDGTA. A helical membrane pass occupies residues 70–90; sequence FLLITINAFGCVIETIYIVLF. Residues 91–104 lie on the Cytoplasmic side of the membrane; sequence VSYANKKTRISTLK. The chain crosses the membrane as a helical span at residues 105-125; that stretch reads VLGLLNFLGFAAIVLVCELLT. Residues 126–132 lie on the Extracellular side of the membrane; the sequence is KGSTREK. Residues 133 to 153 traverse the membrane as a helical segment; sequence VLGGICVGFSVSVFAAPLSIM. One can recognise a MtN3/slv 2 domain in the interval 133–216; sequence VLGGICVGFS…MILYIIFKYY (84 aa). Topologically, residues 154-166 are cytoplasmic; the sequence is RVVVRTRSVEFMP. A helical membrane pass occupies residues 167-187; that stretch reads FSLSLFLTISAVTWLFYGLAI. The Extracellular segment spans residues 188 to 192; sequence KDFYV. Residues 193 to 213 traverse the membrane as a helical segment; that stretch reads ALPNVLGAFLGAVQMILYIIF. Residues 214 to 294 lie on the Cytoplasmic side of the membrane; it reads KYYKTPVAQK…NKDVQKQSQV (81 aa). The tract at residues 273 to 294 is disordered; the sequence is KSQNMTDPKDQINKDVQKQSQV. Residues 279 to 294 are compositionally biased toward basic and acidic residues; the sequence is DPKDQINKDVQKQSQV.

This sequence belongs to the SWEET sugar transporter family. In terms of assembly, forms heterooligomers with SWEET1, SWEET3, SWEET6, SWEET7, SWEET8, SWEET9, SWEET11 and SWEET17. Expressed at low levels in leaves.

Its subcellular location is the cell membrane. Its function is as follows. Mediates both low-affinity uptake and efflux of sugar across the plasma membrane. Involved in nurturing the male gametophyte. This is Bidirectional sugar transporter SWEET13 from Arabidopsis thaliana (Mouse-ear cress).